Reading from the N-terminus, the 175-residue chain is MTQNSQETVIGRITSVFGVKGWLKVFSYTDPKDGILNYRDWTLLLDGKRIPIRLEEGRRQGQGIVVRLKGIDDREVARTYCGAEIRVPTEQLPELPEGEFYWHQLEGLDVFTVEGECLGKVHHLLETGSNDVLVVHATAGSIDQRERLIPYLPDQVVQQVDLKGSRMVVDWDPEF.

In terms of domain architecture, PRC barrel spans 97–175 (EGEFYWHQLE…RMVVDWDPEF (79 aa)).

It belongs to the RimM family. As to quaternary structure, binds ribosomal protein uS19.

The protein localises to the cytoplasm. Functionally, an accessory protein needed during the final step in the assembly of 30S ribosomal subunit, possibly for assembly of the head region. Essential for efficient processing of 16S rRNA. May be needed both before and after RbfA during the maturation of 16S rRNA. It has affinity for free ribosomal 30S subunits but not for 70S ribosomes. This Marinobacter nauticus (strain ATCC 700491 / DSM 11845 / VT8) (Marinobacter aquaeolei) protein is Ribosome maturation factor RimM.